The following is a 230-amino-acid chain: Large ribosomal subunit protein uL1 (230 aa).

This sequence belongs to the universal ribosomal protein uL1 family. Part of the 50S ribosomal subunit.

Binds directly to 23S rRNA. The L1 stalk is quite mobile in the ribosome, and is involved in E site tRNA release. Its function is as follows. Protein L1 is also a translational repressor protein, it controls the translation of the L11 operon by binding to its mRNA. The polypeptide is Large ribosomal subunit protein uL1 (Bradyrhizobium diazoefficiens (strain JCM 10833 / BCRC 13528 / IAM 13628 / NBRC 14792 / USDA 110)).